Here is a 611-residue protein sequence, read N- to C-terminus: Immediate-early protein 3 (611 aa).

Disordered regions lie at residues 119–155 and 180–383; these read TASH…QRLD and EEEY…SGSD. Residues 138-151 show a composition bias toward basic residues; that stretch reads HSEKKAKKHKNKQR. Positions 141-147 match the Nuclear localization signal motif; the sequence is KKAKKHK. The segment covering 198–213 has biased composition (basic and acidic residues); that stretch reads HFDERSPSRSSSDHGG. Over residues 230-240 the composition is skewed to acidic residues; the sequence is SEDEDDEDDER. Positions 260–277 are enriched in low complexity; that stretch reads HGGSHSSRSSIKSSGSGS. The Nuclear localization signal motif lies at 279 to 285; the sequence is RHHHKRK. Residues 341–376 are compositionally biased toward low complexity; sequence PPSSGSNSNKHSSSSGGSTSSSHKKQQQQQAPSKKP.

The protein resides in the host nucleus. Its function is as follows. Strong transcriptional activator of the E1 promoter, shows an autoregulatory function by repression of the IE1/IE3 promoter. The IE1 protein has some additive effect on the trans-activating properties of the IE3 protein. The protein is Immediate-early protein 3 (IE1) of Mus musculus (Mouse).